The sequence spans 351 residues: Protein Tex24 (351 aa).

Disordered stretches follow at residues 69–101 (PSTA…PSLS), 117–144 (PEDR…AQGK), and 275–298 (EKVK…PKSM). Positions 73-83 (HGKRKPGHLPR) are enriched in basic residues. The segment covering 275–285 (EKVKPSSHDMH) has biased composition (basic and acidic residues).

As to expression, specific to testis, where it is expressed in spermatogonia.

Its subcellular location is the nucleus. In terms of biological role, nuclear factor which might have a role in spermatogenesis. In Mus musculus (Mouse), this protein is Protein Tex24.